The sequence spans 482 residues: Aspartyl/glutamyl-tRNA(Asn/Gln) amidotransferase subunit B (482 aa).

The protein belongs to the GatB/GatE family. GatB subfamily. As to quaternary structure, heterotrimer of A, B and C subunits.

The enzyme catalyses L-glutamyl-tRNA(Gln) + L-glutamine + ATP + H2O = L-glutaminyl-tRNA(Gln) + L-glutamate + ADP + phosphate + H(+). The catalysed reaction is L-aspartyl-tRNA(Asn) + L-glutamine + ATP + H2O = L-asparaginyl-tRNA(Asn) + L-glutamate + ADP + phosphate + 2 H(+). Its function is as follows. Allows the formation of correctly charged Asn-tRNA(Asn) or Gln-tRNA(Gln) through the transamidation of misacylated Asp-tRNA(Asn) or Glu-tRNA(Gln) in organisms which lack either or both of asparaginyl-tRNA or glutaminyl-tRNA synthetases. The reaction takes place in the presence of glutamine and ATP through an activated phospho-Asp-tRNA(Asn) or phospho-Glu-tRNA(Gln). This chain is Aspartyl/glutamyl-tRNA(Asn/Gln) amidotransferase subunit B, found in Methanoregula boonei (strain DSM 21154 / JCM 14090 / 6A8).